The chain runs to 792 residues: Starch synthase 2, chloroplastic/amyloplastic (792 aa).

Residues 1-55 constitute a chloroplast transit peptide; it reads MASVAESSFPLLCQIKTQRRINSSTLRHSRVSYHDLPSGSLSFRSRSFVLGHRCK. The disordered stretch occupies residues 105–295; it reads IKESTPDLDD…GKDEEKPPPL (191 aa). Residues 145-156 are compositionally biased toward polar residues; it reads GSVSPSTYGKSS. Residues 179 to 192 show a composition bias toward low complexity; sequence SSASVISSSPVTSP. The span at 221-233 shows a compositional bias: polar residues; sequence SVMTSPEKTSDPV. Positions 266–275 are enriched in basic and acidic residues; sequence KTEKYVEKTP. Residue lysine 315 participates in ADP-alpha-D-glucose binding.

This sequence belongs to the glycosyltransferase 1 family. Bacterial/plant glycogen synthase subfamily. As to expression, expressed in roots, leaves and flowers.

It is found in the plastid. The protein localises to the chloroplast. Its subcellular location is the amyloplast. It carries out the reaction [(1-&gt;4)-alpha-D-glucosyl](n) + ADP-alpha-D-glucose = [(1-&gt;4)-alpha-D-glucosyl](n+1) + ADP + H(+). Its pathway is glycan biosynthesis; starch biosynthesis. Its function is as follows. Involved in the synthesis of glycan chains within amylopectin in leaves. Is required to produce chains with a degree of polymerization of 12 to 25 (DP12-DP25). In Arabidopsis thaliana (Mouse-ear cress), this protein is Starch synthase 2, chloroplastic/amyloplastic (SS2).